Here is a 621-residue protein sequence, read N- to C-terminus: MVKESDILVIGGGHAGIEASLIAAKMGARVHLITMLIDTIGLASCNPAIGGLGKGHLTKEVDVLGGAMGIITDNSGLQYRVLNASKGPAVRGTRAQIDMDTYRIFARNLVLNTPNLSVSQEMTESLIIENDEMVGVTTNINNTYKAKKVIITTGTFLKGVVHIGEHQNQNGRFGENASNSLALNLRELGFRVERLKTGTCPRVAGNSIDFEGLEEHFGDTNPPYFSYKTKDFNPTQLSCFITYTNPITHQIIRDNFHRAPLFSGQIEGIGPRYCPSIEDKINRFSEKERHQLFLEPQTIHKSEYYINGLSTSLPLDVQEKVIHSIKGLENALITRYGYAIEYDFIQPTELTHTLETKKIKGLYLAGQINGTTGYEEAAAQGLMAGINAVLALKNQDPFILKRNEAYIGVLIDDLVTKGTNEPYRMFTSRAEYRLLLREDNTLFRLGEHAYRLGLMEEDFYKGLKKDQQEIQDNLKRLKECVLTPSKEVLKRLNELDENPINDKVDGVSLLARDSFNLEKMRSFFSFLTPLNERVLEQIKIECKYNIYIEKQHENIAKMDSMLKVSIPKGFVFKGIPGLSLEAVEKLEKFRPKSLFEASEISGITPANLDVLHLYIHLRKNS.

An FAD-binding site is contributed by 11-16 (GGGHAG). 270 to 284 (GPRYCPSIEDKINRF) is an NAD(+) binding site.

Belongs to the MnmG family. Homodimer. Heterotetramer of two MnmE and two MnmG subunits. The cofactor is FAD.

The protein localises to the cytoplasm. Functionally, NAD-binding protein involved in the addition of a carboxymethylaminomethyl (cmnm) group at the wobble position (U34) of certain tRNAs, forming tRNA-cmnm(5)s(2)U34. The chain is tRNA uridine 5-carboxymethylaminomethyl modification enzyme MnmG from Helicobacter pylori (strain Shi470).